Here is a 228-residue protein sequence, read N- to C-terminus: MFNTLKILDLPENERPRERLIKYGSQALSNSELIAIILGTGGRNENVLSLSSRILKQCEGLNGLLTLTPEEIMTLKGIGSAKAAKIIAVGELAKRFKAYKSGDVYIIKSPGDVAGLVMEEMKYFKEEHLRVIMLNTKNIVISCKDVSIGSLNSAIVHPREVFCEALKKNSASIVICHNHPSGDPTPSSEDINVTKRLKQCGIILGINLLDHLIIGHSNYISLKEKNIL.

One can recognise an MPN domain in the interval 106–228 (IIKSPGDVAG…YISLKEKNIL (123 aa)). Zn(2+) contacts are provided by histidine 177, histidine 179, and aspartate 190. The JAMM motif motif lies at 177–190 (HNHPSGDPTPSSED).

It belongs to the UPF0758 family.

This is UPF0758 protein NT01CX_1687 from Clostridium novyi (strain NT).